Consider the following 299-residue polypeptide: 21S rRNA pseudouridine(2819) synthase (299 aa).

Residue D106 is part of the active site.

It belongs to the pseudouridine synthase RluA family.

The protein resides in the mitochondrion. It carries out the reaction uridine(2819) in 21S rRNA = pseudouridine(2819) in 21S rRNA. Its function is as follows. Pseudouridylate synthase responsible for the pseudouridine-2819 formation in mitochondrial 21S rRNA. May modulate the efficiency or the fidelity of the mitochondrial translation machinery. This chain is 21S rRNA pseudouridine(2819) synthase (PUS5), found in Kluyveromyces lactis (strain ATCC 8585 / CBS 2359 / DSM 70799 / NBRC 1267 / NRRL Y-1140 / WM37) (Yeast).